Reading from the N-terminus, the 108-residue chain is Ig kappa chain V-V region MOPC 173 (108 aa).

Residues 1–23 (DIQMTQTTSSLSASLGDRVTISC) form a framework-1 region. Cysteines 23 and 88 form a disulfide. Residues 24 to 34 (SASQSIGNYLB) are complementarity-determining-1. A framework-2 region spans residues 35 to 49 (WYQQKPDGTVKLLIY). The tract at residues 50-56 (YTSSLHS) is complementarity-determining-2. Residues 57-88 (GVPSRFSGSGSGTDYSLTISBLZPZBIATYYC) are framework-3. Residues 89-97 (QQYSKLPRT) form a complementarity-determining-3 region. The segment at 98-108 (FGGGTKLEIKR) is framework-4.

This Mus musculus (Mouse) protein is Ig kappa chain V-V region MOPC 173.